The sequence spans 118 residues: Small ribosomal subunit protein uS13 (118 aa).

Positions 91 to 118 (HRRSLPVRGQRTKTNARTRKGPRKPIKA) are disordered.

This sequence belongs to the universal ribosomal protein uS13 family. As to quaternary structure, part of the 30S ribosomal subunit. Forms a loose heterodimer with protein S19. Forms two bridges to the 50S subunit in the 70S ribosome.

Functionally, located at the top of the head of the 30S subunit, it contacts several helices of the 16S rRNA. In the 70S ribosome it contacts the 23S rRNA (bridge B1a) and protein L5 of the 50S subunit (bridge B1b), connecting the 2 subunits; these bridges are implicated in subunit movement. Contacts the tRNAs in the A and P-sites. In Francisella tularensis subsp. tularensis (strain FSC 198), this protein is Small ribosomal subunit protein uS13.